Here is a 434-residue protein sequence, read N- to C-terminus: Glutamate-1-semialdehyde 2,1-aminomutase 2 (434 aa).

K269 is modified (N6-(pyridoxal phosphate)lysine).

The protein belongs to the class-III pyridoxal-phosphate-dependent aminotransferase family. HemL subfamily. Homodimer. The cofactor is pyridoxal 5'-phosphate.

Its subcellular location is the cytoplasm. It catalyses the reaction (S)-4-amino-5-oxopentanoate = 5-aminolevulinate. It functions in the pathway porphyrin-containing compound metabolism; protoporphyrin-IX biosynthesis; 5-aminolevulinate from L-glutamyl-tRNA(Glu): step 2/2. The sequence is that of Glutamate-1-semialdehyde 2,1-aminomutase 2 from Exiguobacterium sp. (strain ATCC BAA-1283 / AT1b).